Reading from the N-terminus, the 37-residue chain is Large ribosomal subunit protein bL36c (37 aa).

The protein belongs to the bacterial ribosomal protein bL36 family.

It is found in the plastid. Its subcellular location is the chloroplast. The sequence is that of Large ribosomal subunit protein bL36c from Acorus calamus (Sweet flag).